We begin with the raw amino-acid sequence, 98 residues long: UPF0473 protein LAR_0522 (98 aa).

The protein belongs to the UPF0473 family.

The sequence is that of UPF0473 protein LAR_0522 from Limosilactobacillus reuteri subsp. reuteri (strain JCM 1112) (Lactobacillus reuteri).